A 409-amino-acid chain; its full sequence is Elongation factor Tu (409 aa).

Positions 10-214 (KPHVNIGTIG…AVDDNIPEPE (205 aa)) constitute a tr-type G domain. Positions 19–26 (GHVDHGKT) are G1. 19–26 (GHVDHGKT) provides a ligand contact to GTP. Thr26 contributes to the Mg(2+) binding site. Residues 60–64 (GITIN) form a G2 region. Residues 81-84 (DCPG) are G3. Residues 81-85 (DCPGH) and 136-139 (NKKD) contribute to the GTP site. The G4 stretch occupies residues 136 to 139 (NKKD). Positions 174-176 (SAL) are G5.

This sequence belongs to the TRAFAC class translation factor GTPase superfamily. Classic translation factor GTPase family. EF-Tu/EF-1A subfamily. As to quaternary structure, monomer.

It is found in the cytoplasm. The enzyme catalyses GTP + H2O = GDP + phosphate + H(+). In terms of biological role, GTP hydrolase that promotes the GTP-dependent binding of aminoacyl-tRNA to the A-site of ribosomes during protein biosynthesis. The protein is Elongation factor Tu of Crocosphaera subtropica (strain ATCC 51142 / BH68) (Cyanothece sp. (strain ATCC 51142)).